Here is an 89-residue protein sequence, read N- to C-terminus: Small ribosomal subunit protein uS15 (89 aa).

Belongs to the universal ribosomal protein uS15 family. In terms of assembly, part of the 30S ribosomal subunit. Forms a bridge to the 50S subunit in the 70S ribosome, contacting the 23S rRNA.

Its function is as follows. One of the primary rRNA binding proteins, it binds directly to 16S rRNA where it helps nucleate assembly of the platform of the 30S subunit by binding and bridging several RNA helices of the 16S rRNA. Functionally, forms an intersubunit bridge (bridge B4) with the 23S rRNA of the 50S subunit in the ribosome. The sequence is that of Small ribosomal subunit protein uS15 from Oceanobacillus iheyensis (strain DSM 14371 / CIP 107618 / JCM 11309 / KCTC 3954 / HTE831).